Consider the following 122-residue polypeptide: Large ribosomal subunit protein uL14 (122 aa).

The protein belongs to the universal ribosomal protein uL14 family. Part of the 50S ribosomal subunit. Forms a cluster with proteins L3 and L19. In the 70S ribosome, L14 and L19 interact and together make contacts with the 16S rRNA in bridges B5 and B8.

Binds to 23S rRNA. Forms part of two intersubunit bridges in the 70S ribosome. In Phenylobacterium zucineum (strain HLK1), this protein is Large ribosomal subunit protein uL14.